A 222-amino-acid chain; its full sequence is Ribonuclease T (222 aa).

The Exonuclease domain occupies 20-194 (VVIDVETAGF…YDTERTAELF (175 aa)). Residues aspartate 23, glutamate 25, histidine 181, and aspartate 186 each coordinate Mg(2+). The active-site Proton donor/acceptor is histidine 181.

Belongs to the RNase T family. Homodimer. Mg(2+) serves as cofactor.

In terms of biological role, trims short 3' overhangs of a variety of RNA species, leaving a one or two nucleotide 3' overhang. Responsible for the end-turnover of tRNA: specifically removes the terminal AMP residue from uncharged tRNA (tRNA-C-C-A). Also appears to be involved in tRNA biosynthesis. In Shewanella sp. (strain ANA-3), this protein is Ribonuclease T.